Reading from the N-terminus, the 300-residue chain is Integrin-binding sialoprotein (300 aa).

A disordered region spans residues arginine 41–aspartate 258. Phosphoserine is present on residues serine 46, serine 51, serine 59, serine 60, serine 82, and serine 90. A compositionally biased stretch (low complexity) spans serine 46 to aspartate 58. Residues serine 59–alanine 92 show a composition bias toward acidic residues. Residues glutamate 93–leucine 102 show a composition bias toward polar residues. N-linked (GlcNAc...) asparagine glycosylation occurs at asparagine 94. A compositionally biased stretch (basic and acidic residues) spans lysine 125–glutamate 136. A compositionally biased stretch (acidic residues) spans glutamate 137–glutamate 160. Position 139 is a phosphoserine (serine 139). Polar residues-rich tracts occupy residues glutamine 161–valine 173, valine 193–alanine 202, and isoleucine 229–proline 243. 2 N-linked (GlcNAc...) asparagine glycosylation sites follow: asparagine 164 and asparagine 169. At serine 266 the chain carries Phosphoserine. Residues arginine 272–aspartate 274 carry the Integrin-binding motif motif. Position 293 is a phosphoserine (serine 293). Sulfotyrosine is present on residues tyrosine 299 and tyrosine 300.

Monomer. Interacts with integrins; the interaction promotes cell adhesion.

Its subcellular location is the secreted. In terms of biological role, binds tightly to hydroxyapatite. Appears to form an integral part of the mineralized matrix. Probably important to cell-matrix interaction. Promotes adhesion and migration of various cells via the alpha-V/beta-3 integrin receptor (ITGAV:ITGB3). This Sus scrofa (Pig) protein is Integrin-binding sialoprotein (IBSP).